An 827-amino-acid chain; its full sequence is Carnosine synthase 1 (827 aa).

The ATP-grasp domain occupies 516–720 (GPPWPAPSLH…LLLAAVMVAC (205 aa)). 542 to 611 (VHQVPLPGVM…MEFVEGTEHD (70 aa)) is a binding site for ATP. Mg(2+)-binding residues include E677, E689, and N691. Residues E677, E689, and N691 each contribute to the Mn(2+) site.

In terms of assembly, homotetramer. The cofactor is Mg(2+). Requires Mn(2+) as cofactor.

The enzyme catalyses beta-alanine + L-histidine + ATP = carnosine + ADP + phosphate + H(+). The catalysed reaction is 4-aminobutanoate + L-histidine + ATP = L-homocarnosine + ADP + phosphate + H(+). In terms of biological role, catalyzes the synthesis of carnosine and homocarnosine. Carnosine is synthesized more efficiently than homocarnosine. This chain is Carnosine synthase 1, found in Homo sapiens (Human).